The primary structure comprises 103 residues: Large ribosomal subunit protein bL28 (103 aa).

This sequence belongs to the bacterial ribosomal protein bL28 family.

This chain is Large ribosomal subunit protein bL28, found in Anaplasma phagocytophilum (strain HZ).